We begin with the raw amino-acid sequence, 128 residues long: Large ribosomal subunit protein bL12 (128 aa).

It belongs to the bacterial ribosomal protein bL12 family. As to quaternary structure, homodimer. Part of the ribosomal stalk of the 50S ribosomal subunit. Forms a multimeric L10(L12)X complex, where L10 forms an elongated spine to which 2 to 4 L12 dimers bind in a sequential fashion. Binds GTP-bound translation factors.

Functionally, forms part of the ribosomal stalk which helps the ribosome interact with GTP-bound translation factors. Is thus essential for accurate translation. This Kosmotoga olearia (strain ATCC BAA-1733 / DSM 21960 / TBF 19.5.1) protein is Large ribosomal subunit protein bL12.